A 255-amino-acid chain; its full sequence is Pyridoxine 5'-phosphate synthase (255 aa).

Asn12 is a 3-amino-2-oxopropyl phosphate binding site. A 1-deoxy-D-xylulose 5-phosphate-binding site is contributed by 14-15; that stretch reads DH. A 3-amino-2-oxopropyl phosphate-binding site is contributed by Arg23. The Proton acceptor role is filled by His48. The 1-deoxy-D-xylulose 5-phosphate site is built by Arg50 and His55. The Proton acceptor role is filled by Glu75. Thr105 lines the 1-deoxy-D-xylulose 5-phosphate pocket. The Proton donor role is filled by His199. Residues Gly200 and 221–222 each bind 3-amino-2-oxopropyl phosphate; that span reads GF.

Belongs to the PNP synthase family. Homooctamer; tetramer of dimers.

It localises to the cytoplasm. The catalysed reaction is 3-amino-2-oxopropyl phosphate + 1-deoxy-D-xylulose 5-phosphate = pyridoxine 5'-phosphate + phosphate + 2 H2O + H(+). It functions in the pathway cofactor biosynthesis; pyridoxine 5'-phosphate biosynthesis; pyridoxine 5'-phosphate from D-erythrose 4-phosphate: step 5/5. Catalyzes the complicated ring closure reaction between the two acyclic compounds 1-deoxy-D-xylulose-5-phosphate (DXP) and 3-amino-2-oxopropyl phosphate (1-amino-acetone-3-phosphate or AAP) to form pyridoxine 5'-phosphate (PNP) and inorganic phosphate. This is Pyridoxine 5'-phosphate synthase from Rhodopseudomonas palustris (strain BisB18).